Here is a 156-residue protein sequence, read N- to C-terminus: Endoribonuclease YbeY (156 aa).

3 residues coordinate Zn(2+): histidine 122, histidine 126, and histidine 132.

Belongs to the endoribonuclease YbeY family. Zn(2+) is required as a cofactor.

Its subcellular location is the cytoplasm. Single strand-specific metallo-endoribonuclease involved in late-stage 70S ribosome quality control and in maturation of the 3' terminus of the 16S rRNA. The chain is Endoribonuclease YbeY from Pediococcus pentosaceus (strain ATCC 25745 / CCUG 21536 / LMG 10740 / 183-1w).